Reading from the N-terminus, the 368-residue chain is DNA replication and repair protein RecF (368 aa).

30–37 (GRNGSGKT) is a binding site for ATP.

The protein belongs to the RecF family.

The protein localises to the cytoplasm. In terms of biological role, the RecF protein is involved in DNA metabolism; it is required for DNA replication and normal SOS inducibility. RecF binds preferentially to single-stranded, linear DNA. It also seems to bind ATP. The chain is DNA replication and repair protein RecF from Chlorobaculum tepidum (strain ATCC 49652 / DSM 12025 / NBRC 103806 / TLS) (Chlorobium tepidum).